The sequence spans 833 residues: Protein translocase subunit SecA (833 aa).

Residues Q87, 105–109 (GEGKT), and D494 contribute to the ATP site. Residues 789–816 (PAAVAYSGGEAEAGPAQPHREDPKVGRN) form a disordered region. The segment covering 806–815 (PHREDPKVGR) has biased composition (basic and acidic residues). Residues C819, C821, C830, and C831 each coordinate Zn(2+).

Belongs to the SecA family. As to quaternary structure, monomer and homodimer. Part of the essential Sec protein translocation apparatus which comprises SecA, SecYEG and auxiliary proteins SecDF-YajC and YidC. Zn(2+) is required as a cofactor.

It is found in the cell inner membrane. It localises to the cytoplasm. It catalyses the reaction ATP + H2O + cellular proteinSide 1 = ADP + phosphate + cellular proteinSide 2.. In terms of biological role, part of the Sec protein translocase complex. Interacts with the SecYEG preprotein conducting channel. Has a central role in coupling the hydrolysis of ATP to the transfer of proteins into and across the cell membrane, serving as an ATP-driven molecular motor driving the stepwise translocation of polypeptide chains across the membrane. The sequence is that of Protein translocase subunit SecA from Nitratidesulfovibrio vulgaris (strain ATCC 29579 / DSM 644 / CCUG 34227 / NCIMB 8303 / VKM B-1760 / Hildenborough) (Desulfovibrio vulgaris).